The sequence spans 455 residues: Bifunctional protein GlmU (455 aa).

The segment at 1-226 (MSLDIVILAA…AMEVQGANDR (226 aa)) is pyrophosphorylase. UDP-N-acetyl-alpha-D-glucosamine contacts are provided by residues 8–11 (LAAG), lysine 22, glutamine 73, 78–79 (GT), 99–101 (YGD), glycine 136, glutamate 151, asparagine 166, and asparagine 224. Mg(2+) is bound at residue aspartate 101. A Mg(2+)-binding site is contributed by asparagine 224. The linker stretch occupies residues 227 to 247 (KQLSELERHYQLREARRLMAG). The segment at 248-455 (GVTLRDPARF…WKRPVKIRKD (208 aa)) is N-acetyltransferase. UDP-N-acetyl-alpha-D-glucosamine-binding residues include arginine 330 and lysine 348. Histidine 360 functions as the Proton acceptor in the catalytic mechanism. Residues tyrosine 363 and asparagine 374 each contribute to the UDP-N-acetyl-alpha-D-glucosamine site. Acetyl-CoA-binding positions include alanine 377, 383-384 (NY), serine 402, alanine 420, and arginine 437.

The protein in the N-terminal section; belongs to the N-acetylglucosamine-1-phosphate uridyltransferase family. It in the C-terminal section; belongs to the transferase hexapeptide repeat family. As to quaternary structure, homotrimer. It depends on Mg(2+) as a cofactor.

The protein localises to the cytoplasm. The catalysed reaction is alpha-D-glucosamine 1-phosphate + acetyl-CoA = N-acetyl-alpha-D-glucosamine 1-phosphate + CoA + H(+). It catalyses the reaction N-acetyl-alpha-D-glucosamine 1-phosphate + UTP + H(+) = UDP-N-acetyl-alpha-D-glucosamine + diphosphate. Its pathway is nucleotide-sugar biosynthesis; UDP-N-acetyl-alpha-D-glucosamine biosynthesis; N-acetyl-alpha-D-glucosamine 1-phosphate from alpha-D-glucosamine 6-phosphate (route II): step 2/2. It participates in nucleotide-sugar biosynthesis; UDP-N-acetyl-alpha-D-glucosamine biosynthesis; UDP-N-acetyl-alpha-D-glucosamine from N-acetyl-alpha-D-glucosamine 1-phosphate: step 1/1. The protein operates within bacterial outer membrane biogenesis; LPS lipid A biosynthesis. In terms of biological role, catalyzes the last two sequential reactions in the de novo biosynthetic pathway for UDP-N-acetylglucosamine (UDP-GlcNAc). The C-terminal domain catalyzes the transfer of acetyl group from acetyl coenzyme A to glucosamine-1-phosphate (GlcN-1-P) to produce N-acetylglucosamine-1-phosphate (GlcNAc-1-P), which is converted into UDP-GlcNAc by the transfer of uridine 5-monophosphate (from uridine 5-triphosphate), a reaction catalyzed by the N-terminal domain. The sequence is that of Bifunctional protein GlmU from Pseudomonas savastanoi pv. phaseolicola (strain 1448A / Race 6) (Pseudomonas syringae pv. phaseolicola (strain 1448A / Race 6)).